The sequence spans 187 residues: MASTADFKNGLVLVIDGQLWQIVEFQHVKPGKGPAFVRTKLKNVLSGKVVDKTYNAGVKVETATVDRRDTTYLYRDGSDFVFMDSQDYEQHPLPESLVGDAARFLLEGMPVQVAFHNGSPLYIELPVSVEMEVTHTEPGLQGDRSSAGTKPATVETGAEIQVPLFINTGDKLKVDTRDGSYLGRVNA.

Belongs to the elongation factor P family.

It localises to the cytoplasm. It participates in protein biosynthesis; polypeptide chain elongation. Involved in peptide bond synthesis. Stimulates efficient translation and peptide-bond synthesis on native or reconstituted 70S ribosomes in vitro. Probably functions indirectly by altering the affinity of the ribosome for aminoacyl-tRNA, thus increasing their reactivity as acceptors for peptidyl transferase. This chain is Elongation factor P, found in Mycobacterium avium (strain 104).